A 321-amino-acid polypeptide reads, in one-letter code: MVAPKWVFISFMILLSLAICSGQPVTSDAIKAKEADHDNLKAHTLSNIDAKGFGGGGGFGIGGGWAGGGGGGGDGGGSDTPNYGYNPGCSIHGCTVPGFGFLPKPVFGVPVYSPGCGYVCPADIPTGGMTESKITGISQSARLYRCKPGPNMCDSKDCNELLLHFVFPMQDKHDNKQEHLRYGGRRGIGLTVGGVGGFGIGFGAWGGGGGGGGGGSDAPGCSNDGCDPGFGCPPGCGYACPANNPSGGITEFHISGLSRFDGPYRCRPDMCESEDCNELLLHFVSPMQHKHENRHDHIVERSDEEEAHHQSKQHKDEDIIN.

Residues 301 to 321 (RSDEEEAHHQSKQHKDEDIIN) form a disordered region.

Anther specific (tapetal cells).

The polypeptide is Anther-specific protein TA-29 (TA-29) (Nicotiana tabacum (Common tobacco)).